We begin with the raw amino-acid sequence, 210 residues long: Putative 3-methyladenine DNA glycosylase (210 aa).

The protein belongs to the DNA glycosylase MPG family.

This Corynebacterium glutamicum (strain R) protein is Putative 3-methyladenine DNA glycosylase.